The sequence spans 995 residues: Beta-agarase A (995 aa).

An N-terminal signal peptide occupies residues Met-1 to Ala-20. Positions Gly-936–Gly-972 are disordered. Residues Ala-948–Pro-965 are compositionally biased toward pro residues.

This sequence belongs to the glycosyl hydrolase 50 family.

The enzyme catalyses Hydrolysis of (1-&gt;4)-beta-D-galactosidic linkages in agarose, giving the tetramer as the predominant product.. Its function is as follows. Hydrolyzes agarose and also neoagarotetraose to yield neoagarobiose. This is Beta-agarase A (agaA) from Vibrio sp. (strain JT0107).